The sequence spans 61 residues: Small ribosomal subunit protein uS14 (61 aa).

Zn(2+)-binding residues include Cys-24, Cys-27, Cys-40, and Cys-43.

Belongs to the universal ribosomal protein uS14 family. Zinc-binding uS14 subfamily. In terms of assembly, part of the 30S ribosomal subunit. Contacts proteins S3 and S10. Zn(2+) serves as cofactor.

Binds 16S rRNA, required for the assembly of 30S particles and may also be responsible for determining the conformation of the 16S rRNA at the A site. This chain is Small ribosomal subunit protein uS14, found in Lachnospira eligens (strain ATCC 27750 / DSM 3376 / VPI C15-48 / C15-B4) (Eubacterium eligens).